Here is a 114-residue protein sequence, read N- to C-terminus: Large ribosomal subunit protein uL18 (114 aa).

Belongs to the universal ribosomal protein uL18 family. As to quaternary structure, part of the 50S ribosomal subunit; part of the 5S rRNA/L5/L18/L25 subcomplex. Contacts the 23S rRNA. Contacts protein L27 and the 5S rRNA.

Functionally, this is one of the proteins that bind and probably mediate the attachment of the 5S RNA into the large ribosomal subunit, where it forms part of the central protuberance. The sequence is that of Large ribosomal subunit protein uL18 (rplR) from Deinococcus radiodurans (strain ATCC 13939 / DSM 20539 / JCM 16871 / CCUG 27074 / LMG 4051 / NBRC 15346 / NCIMB 9279 / VKM B-1422 / R1).